Reading from the N-terminus, the 390-residue chain is Phosphoglycerate kinase (390 aa).

Residues 21–23 (DLN), arginine 36, 59–62 (HLGR), arginine 112, and arginine 145 each bind substrate. ATP contacts are provided by residues lysine 196, glutamate 317, and 343-346 (GGDT).

The protein belongs to the phosphoglycerate kinase family. In terms of assembly, monomer.

It is found in the cytoplasm. It catalyses the reaction (2R)-3-phosphoglycerate + ATP = (2R)-3-phospho-glyceroyl phosphate + ADP. It participates in carbohydrate degradation; glycolysis; pyruvate from D-glyceraldehyde 3-phosphate: step 2/5. In Cellvibrio japonicus (strain Ueda107) (Pseudomonas fluorescens subsp. cellulosa), this protein is Phosphoglycerate kinase.